A 337-amino-acid polypeptide reads, in one-letter code: Aspartate carbamoyltransferase catalytic subunit (337 aa).

Carbamoyl phosphate-binding residues include arginine 59 and threonine 60. Lysine 87 serves as a coordination point for L-aspartate. The carbamoyl phosphate site is built by arginine 109, histidine 142, and glutamine 145. The L-aspartate site is built by arginine 182 and arginine 253. Residues glycine 294 and proline 295 each coordinate carbamoyl phosphate.

Belongs to the aspartate/ornithine carbamoyltransferase superfamily. ATCase family. In terms of assembly, heterododecamer (2C3:3R2) of six catalytic PyrB chains organized as two trimers (C3), and six regulatory PyrI chains organized as three dimers (R2).

It carries out the reaction carbamoyl phosphate + L-aspartate = N-carbamoyl-L-aspartate + phosphate + H(+). It participates in pyrimidine metabolism; UMP biosynthesis via de novo pathway; (S)-dihydroorotate from bicarbonate: step 2/3. Functionally, catalyzes the condensation of carbamoyl phosphate and aspartate to form carbamoyl aspartate and inorganic phosphate, the committed step in the de novo pyrimidine nucleotide biosynthesis pathway. The polypeptide is Aspartate carbamoyltransferase catalytic subunit (Prochlorococcus marinus (strain MIT 9211)).